Reading from the N-terminus, the 496-residue chain is Probable CtpA-like serine protease (496 aa).

Residues 1–16 (MDDKQHTSSSDDERAE) show a composition bias toward basic and acidic residues. Residues 1-27 (MDDKQHTSSSDDERAEIATSNQDQQTN) form a disordered region. Over residues 18-27 (ATSNQDQQTN) the composition is skewed to polar residues. The helical transmembrane segment at 39–59 (FISILIGTILITAVITVVAYI) threads the bilayer. The PDZ domain maps to 124 to 206 (TKSFNEGVSG…TEVTLTVQRG (83 aa)). Residues serine 329, aspartate 340, and lysine 354 each act as charge relay system in the active site.

This sequence belongs to the peptidase S41A family.

It localises to the cell membrane. This chain is Probable CtpA-like serine protease, found in Staphylococcus aureus (strain bovine RF122 / ET3-1).